The primary structure comprises 34 residues: Crassicorin-II (34 aa).

A disulfide bond links Cys6 and Cys30.

Highly expressed by the mesenteries. Moderately expressed by the pharynx. Weakly expressed by the gonad and pedal disk. No expression in tentacle.

It localises to the secreted. It is found in the nematocyst. Peptide with both antimicrobial and neurotoxin activities. Cationic AMP with antimicrobial activity against both Gram-positive bacteria (B.subtilis) and Gram-negative bacteria (E.coli and S.enterica). Shows no significant antimicrobial activity against bacteria S.aureus and P.aeruginosa, as well as the fungus C.albicans. In vivo, induces reversible paralytic activity towards the shrimp P.paucidens. May act by impairing sodium or potassium channels in the prey. This Urticina crassicornis (Mottled anemone) protein is Crassicorin-II.